The primary structure comprises 455 residues: Virion host shutoff protein (455 aa).

The protein belongs to the herpesviridae VHS protein family.

The protein resides in the virion. Its function is as follows. Minor structural protein that acts as an endoribonuclease during lytic infection. Degrades host mRNAs in the cytoplasm by cutting them at preferred sites, including some in regions of translation initiation. The sequence is that of Virion host shutoff protein (17) from Homo sapiens (Human).